Consider the following 393-residue polypeptide: S-adenosylmethionine synthase (393 aa).

His16 lines the ATP pocket. Asp18 lines the Mg(2+) pocket. Glu44 provides a ligand contact to K(+). L-methionine-binding residues include Glu57 and Gln100. The tract at residues 100-110 (QSPDIVMGVDG) is flexible loop. Residues 165–167 (DAK), 231–232 (RF), Asp240, 246–247 (RK), and Lys267 each bind ATP. Asp240 contributes to the L-methionine binding site. Residue Lys271 coordinates L-methionine.

This sequence belongs to the AdoMet synthase family. Homotetramer; dimer of dimers. Mg(2+) serves as cofactor. The cofactor is K(+).

The protein localises to the cytoplasm. The catalysed reaction is L-methionine + ATP + H2O = S-adenosyl-L-methionine + phosphate + diphosphate. It participates in amino-acid biosynthesis; S-adenosyl-L-methionine biosynthesis; S-adenosyl-L-methionine from L-methionine: step 1/1. Catalyzes the formation of S-adenosylmethionine (AdoMet) from methionine and ATP. The overall synthetic reaction is composed of two sequential steps, AdoMet formation and the subsequent tripolyphosphate hydrolysis which occurs prior to release of AdoMet from the enzyme. In Coxiella burnetii (strain CbuG_Q212) (Coxiella burnetii (strain Q212)), this protein is S-adenosylmethionine synthase.